Consider the following 344-residue polypeptide: Dihydroorotase (344 aa).

Residues His-13 and His-15 each contribute to the Zn(2+) site. Substrate is bound by residues His-15–Arg-17 and Asn-41. Zn(2+)-binding residues include Lys-98, His-135, and His-173. Lys-98 carries the N6-carboxylysine modification. Residue His-135 coordinates substrate. Residue Leu-218 coordinates substrate. A Zn(2+)-binding site is contributed by Asp-246. Asp-246 is a catalytic residue. Positions 250 and 262 each coordinate substrate.

It belongs to the metallo-dependent hydrolases superfamily. DHOase family. Class II DHOase subfamily. In terms of assembly, homodimer. Requires Zn(2+) as cofactor.

It carries out the reaction (S)-dihydroorotate + H2O = N-carbamoyl-L-aspartate + H(+). It functions in the pathway pyrimidine metabolism; UMP biosynthesis via de novo pathway; (S)-dihydroorotate from bicarbonate: step 3/3. Its function is as follows. Catalyzes the reversible cyclization of carbamoyl aspartate to dihydroorotate. This chain is Dihydroorotase, found in Shewanella woodyi (strain ATCC 51908 / MS32).